We begin with the raw amino-acid sequence, 213 residues long: Glutathione S-transferase APIC (213 aa).

A GST N-terminal domain is found at 1–82 (MAIKVHGSPM…YIAHVYADNG (82 aa)). Glutathione contacts are provided by residues Ser11, 12–13 (TA), 40–41 (HK), 53–54 (QV), and 66–67 (ES). The GST C-terminal domain maps to 89–213 (DPKKMPIMSV…WVKGLEKLQK (125 aa)).

Belongs to the GST superfamily. Phi family.

It catalyses the reaction RX + glutathione = an S-substituted glutathione + a halide anion + H(+). Conjugation of reduced glutathione to a wide number of exogenous and endogenous hydrophobic electrophiles. The sequence is that of Glutathione S-transferase APIC from Nicotiana tabacum (Common tobacco).